Reading from the N-terminus, the 215-residue chain is Pyrophosphatase PpaX (215 aa).

D9 acts as the Nucleophile in catalysis.

This sequence belongs to the HAD-like hydrolase superfamily. PpaX family. Requires Mg(2+) as cofactor.

It catalyses the reaction diphosphate + H2O = 2 phosphate + H(+). In terms of biological role, hydrolyzes pyrophosphate formed during P-Ser-HPr dephosphorylation by HPrK/P. Might play a role in controlling the intracellular pyrophosphate pool. The polypeptide is Pyrophosphatase PpaX (Bacillus mycoides (strain KBAB4) (Bacillus weihenstephanensis)).